A 70-amino-acid polypeptide reads, in one-letter code: Protein SlyX homolog (70 aa).

It belongs to the SlyX family.

In Shewanella oneidensis (strain ATCC 700550 / JCM 31522 / CIP 106686 / LMG 19005 / NCIMB 14063 / MR-1), this protein is Protein SlyX homolog.